Reading from the N-terminus, the 572-residue chain is MRTSQYLLSTLKETPADAEVISHQLMLRAGMIRKLASGLYTWLPTGLRVLKKVENIVREEMNNAGAIEVSMPVVQPADLWQESGRWEQYGPELLRFVDRGERPFVLGPTHEEVITDLIRNELSSYKQLPLNFFQIQTKFRDEVRPRFGVMRSREFLMKDAYSFHTSQESLQETYDAMYAAYSKIFSRMGLDFRAVQADTGSIGGNASHEFQVLAQSGEDDVIFSDSSDYAANIEFAEAVAPKAPRAAASQEMTLVDTPNAKTIAELVEQFNLPIEKTVKTLLVKAVEGSSYPLVALLVRGDHELNEVKAEKLPQVASPLTFATEEEIRALVKAGPGSLGPVNMPVPVVIDRTVAVMSDFAAGANIDGKHYFGINWDRDVATPEVADIRNVVAGDPSPDGQGTLLIKRGIEVGHIFQLGTKYSEALKASVQGEDGRNQILTMGCYGIGVTRVVAAAIEQNYDERGIVWPDAIAPFQVAILPMNMHKSFRVQELAEKLYGELRAQGIEVLMDDRKERPGVMFADMELIGIPHTIVLGDRNLDNDDIEYKYRRNGEKQLIKTGEIVDFLVKAIKG.

The protein belongs to the class-II aminoacyl-tRNA synthetase family. ProS type 1 subfamily. Homodimer.

The protein localises to the cytoplasm. The enzyme catalyses tRNA(Pro) + L-proline + ATP = L-prolyl-tRNA(Pro) + AMP + diphosphate. Catalyzes the attachment of proline to tRNA(Pro) in a two-step reaction: proline is first activated by ATP to form Pro-AMP and then transferred to the acceptor end of tRNA(Pro). As ProRS can inadvertently accommodate and process non-cognate amino acids such as alanine and cysteine, to avoid such errors it has two additional distinct editing activities against alanine. One activity is designated as 'pretransfer' editing and involves the tRNA(Pro)-independent hydrolysis of activated Ala-AMP. The other activity is designated 'posttransfer' editing and involves deacylation of mischarged Ala-tRNA(Pro). The misacylated Cys-tRNA(Pro) is not edited by ProRS. The polypeptide is Proline--tRNA ligase (Citrobacter koseri (strain ATCC BAA-895 / CDC 4225-83 / SGSC4696)).